The sequence spans 338 residues: S-adenosylmethionine:tRNA ribosyltransferase-isomerase (338 aa).

The protein belongs to the QueA family. In terms of assembly, monomer.

Its subcellular location is the cytoplasm. It carries out the reaction 7-aminomethyl-7-carbaguanosine(34) in tRNA + S-adenosyl-L-methionine = epoxyqueuosine(34) in tRNA + adenine + L-methionine + 2 H(+). It participates in tRNA modification; tRNA-queuosine biosynthesis. Transfers and isomerizes the ribose moiety from AdoMet to the 7-aminomethyl group of 7-deazaguanine (preQ1-tRNA) to give epoxyqueuosine (oQ-tRNA). This is S-adenosylmethionine:tRNA ribosyltransferase-isomerase from Francisella tularensis subsp. mediasiatica (strain FSC147).